The sequence spans 86 residues: Small ribosomal subunit protein bS18 (86 aa).

Belongs to the bacterial ribosomal protein bS18 family. In terms of assembly, part of the 30S ribosomal subunit. Forms a tight heterodimer with protein bS6.

In terms of biological role, binds as a heterodimer with protein bS6 to the central domain of the 16S rRNA, where it helps stabilize the platform of the 30S subunit. This Protochlamydia amoebophila (strain UWE25) protein is Small ribosomal subunit protein bS18.